Reading from the N-terminus, the 72-residue chain is Translation initiation factor IF-1 (72 aa).

The region spanning 2-72 (AKDDVIEVDG…TRGRITYRFK (71 aa)) is the S1-like domain.

It belongs to the IF-1 family. As to quaternary structure, component of the 30S ribosomal translation pre-initiation complex which assembles on the 30S ribosome in the order IF-2 and IF-3, IF-1 and N-formylmethionyl-tRNA(fMet); mRNA recruitment can occur at any time during PIC assembly.

The protein resides in the cytoplasm. In terms of biological role, one of the essential components for the initiation of protein synthesis. Stabilizes the binding of IF-2 and IF-3 on the 30S subunit to which N-formylmethionyl-tRNA(fMet) subsequently binds. Helps modulate mRNA selection, yielding the 30S pre-initiation complex (PIC). Upon addition of the 50S ribosomal subunit IF-1, IF-2 and IF-3 are released leaving the mature 70S translation initiation complex. This is Translation initiation factor IF-1 from Lactococcus lactis subsp. lactis (strain IL1403) (Streptococcus lactis).